The sequence spans 218 residues: Large ribosomal subunit protein bL25 (218 aa).

Positions 187–218 are disordered; sequence SATAAVEEAKEDGAPEESAQGQGAAEAQETGK. The span at 202–218 shows a compositional bias: low complexity; sequence EESAQGQGAAEAQETGK.

This sequence belongs to the bacterial ribosomal protein bL25 family. CTC subfamily. Part of the 50S ribosomal subunit; part of the 5S rRNA/L5/L18/L25 subcomplex. Contacts the 5S rRNA. Binds to the 5S rRNA independently of L5 and L18.

This is one of the proteins that binds to the 5S RNA in the ribosome where it forms part of the central protuberance. The sequence is that of Large ribosomal subunit protein bL25 from Anaplasma marginale (strain Florida).